We begin with the raw amino-acid sequence, 361 residues long: Septin-2 (361 aa).

Y17 is modified (phosphotyrosine). Positions 34–306 (KGFEFTLMVV…ENFRSERLKR (273 aa)) constitute a Septin-type G domain. The G1 motif stretch occupies residues 44-51 (GESGLGKS). Residues 44–51 (GESGLGKS), T78, G104, and 183–191 (KADTLTLKE) contribute to the GTP site. The interval 101-104 (DTPG) is G3 motif. Residues 182–185 (AKAD) form a G4 motif region. K190 is subject to N6-acetyllysine. Y211 is modified (phosphotyrosine). S218 is subject to Phosphoserine. GTP-binding residues include G241 and R256. The interval 260 to 270 (WGVVEVENPEH) is important for dimerization.

The protein belongs to the TRAFAC class TrmE-Era-EngA-EngB-Septin-like GTPase superfamily. Septin GTPase family. Septins polymerize into heterooligomeric protein complexes that form filaments, and associate with cellular membranes, actin filaments and microtubules. GTPase activity is required for filament formation. Septin filaments are assembled from asymmetrical heterotrimers, composed of SEPTIN2, SEPTIN6 and SEPTIN7 that associate head-to-head to form a hexameric unit. Interaction between SEPTIN2 and SEPTIN7 seems indirect. Also interacts with SEPTIN9 and SEPTIN5. Interaction with SEPTIN4 not detected. Component of a septin core octameric complex consisting of SEPTIN12, SEPTIN7, SEPTIN6 and SEPTIN2 or SEPTIN4 in the order 12-7-6-2-2-6-7-12 or 12-7-6-4-4-6-7-12 and located in the sperm annulus. Interacts with MAP4. Interacts with DZIP1L.

It is found in the cytoplasm. The protein localises to the cytoskeleton. It localises to the spindle. Its subcellular location is the cleavage furrow. The protein resides in the midbody. It is found in the cell cortex. The protein localises to the cell projection. It localises to the cilium membrane. Its subcellular location is the cilium. The protein resides in the flagellum. In terms of biological role, filament-forming cytoskeletal GTPase. Forms a filamentous structure with SEPTIN12, SEPTIN6, SEPTIN2 and probably SEPTIN4 at the sperm annulus which is required for the structural integrity and motility of the sperm tail during postmeiotic differentiation. Required for normal organization of the actin cytoskeleton. Plays a role in the biogenesis of polarized columnar-shaped epithelium by maintaining polyglutamylated microtubules, thus facilitating efficient vesicle transport, and by impeding MAP4 binding to tubulin. Required for the progression through mitosis. Forms a scaffold at the midplane of the mitotic splindle required to maintain CENPE localization at kinetochores and consequently chromosome congression. During anaphase, may be required for chromosome segregation and spindle elongation. Plays a role in ciliogenesis and collective cell movements. In cilia, required for the integrity of the diffusion barrier at the base of the primary cilium that prevents diffusion of transmembrane proteins between the cilia and plasma membranes: probably acts by regulating the assembly of the tectonic-like complex (also named B9 complex) by localizing TMEM231 protein. The chain is Septin-2 from Rattus norvegicus (Rat).